The primary structure comprises 386 residues: Succinate--CoA ligase [ADP-forming] subunit beta (386 aa).

The ATP-grasp domain occupies 9–244 (KELLRKYGVV…FDEEDADEIE (236 aa)). ATP contacts are provided by residues Lys-46, 53–55 (GRG), Glu-99, Ala-102, and Glu-107. Asn-199 and Asp-213 together coordinate Mg(2+). Substrate contacts are provided by residues Asn-264 and 321-323 (GIM).

This sequence belongs to the succinate/malate CoA ligase beta subunit family. Heterotetramer of two alpha and two beta subunits. Mg(2+) is required as a cofactor.

The catalysed reaction is succinate + ATP + CoA = succinyl-CoA + ADP + phosphate. It carries out the reaction GTP + succinate + CoA = succinyl-CoA + GDP + phosphate. The protein operates within carbohydrate metabolism; tricarboxylic acid cycle; succinate from succinyl-CoA (ligase route): step 1/1. Functionally, succinyl-CoA synthetase functions in the citric acid cycle (TCA), coupling the hydrolysis of succinyl-CoA to the synthesis of either ATP or GTP and thus represents the only step of substrate-level phosphorylation in the TCA. The beta subunit provides nucleotide specificity of the enzyme and binds the substrate succinate, while the binding sites for coenzyme A and phosphate are found in the alpha subunit. The chain is Succinate--CoA ligase [ADP-forming] subunit beta from Aromatoleum aromaticum (strain DSM 19018 / LMG 30748 / EbN1) (Azoarcus sp. (strain EbN1)).